A 91-amino-acid polypeptide reads, in one-letter code: Small ribosomal subunit protein eS24 (91 aa).

A disordered region spans residues 51–91 (QRRKDAAAHKEAYNAMPEAERRHLNSEKYANRKAEVSYKHR).

Belongs to the eukaryotic ribosomal protein eS24 family.

This chain is Small ribosomal subunit protein eS24, found in Caenorhabditis elegans.